The following is a 389-amino-acid chain: Phosphopentomutase (389 aa).

The Mn(2+) site is built by aspartate 12, aspartate 284, histidine 289, aspartate 325, histidine 326, and histidine 337.

The protein belongs to the phosphopentomutase family. It depends on Mn(2+) as a cofactor.

Its subcellular location is the cytoplasm. It carries out the reaction 2-deoxy-alpha-D-ribose 1-phosphate = 2-deoxy-D-ribose 5-phosphate. The enzyme catalyses alpha-D-ribose 1-phosphate = D-ribose 5-phosphate. It participates in carbohydrate degradation; 2-deoxy-D-ribose 1-phosphate degradation; D-glyceraldehyde 3-phosphate and acetaldehyde from 2-deoxy-alpha-D-ribose 1-phosphate: step 1/2. Its function is as follows. Isomerase that catalyzes the conversion of deoxy-ribose 1-phosphate (dRib-1-P) and ribose 1-phosphate (Rib-1-P) to deoxy-ribose 5-phosphate (dRib-5-P) and ribose 5-phosphate (Rib-5-P), respectively. In Anaeromyxobacter sp. (strain Fw109-5), this protein is Phosphopentomutase.